Here is an 833-residue protein sequence, read N- to C-terminus: Disintegrin and metalloproteinase domain-containing protein 17 (833 aa).

Residues 1–17 (MRQCALFLTSLVPIVLA) form the signal peptide. Residues 223-474 (NTCKLLVVAD…KAQECFQERS (252 aa)) form the Peptidase M12B domain. The tract at residues 301-345 (AKSYPNEEKDAWDVKMLLEQFSFDIAEEASKVCLAHLFTYQDFDM) is interaction with classical swine fever virus envelope glycoprotein E2. 3 disulfides stabilise this stretch: C365/C469, C423/C453, and C534/C555. H405 is a binding site for Zn(2+). Residue E406 is part of the active site. The Zn(2+) site is built by H409 and H415. The region spanning 475–563 (NKVCGNSRVD…ECPPPGNAED (89 aa)) is the Disintegrin domain. The helical transmembrane segment at 672–692 (IVGSVLVFSLMLWIPVSILVH) threads the bilayer. Disordered stretches follow at residues 735 to 760 (TPGR…VPVA) and 772 to 833 (QEDP…ETEC). Basic and acidic residues-rich tracts occupy residues 777 to 790 (TDSH…EKDP), 800 to 816 (SFED…EKAS), and 824 to 833 (SRVDSKETEC).

(Microbial infection) Interacts (via metalloproteinase domain) with classical swine fever virus envelope glycoprotein E2; this interaction allows binding and probably entry of the virus into the cell. As to quaternary structure, interacts with MAD2L1, MAPK14 and MUC1. Interacts with iRhom1/RHBDF1 and iRhom2/RHBDF2. Interacts with FRMD8 via its interaction with iRhom1/RHBDF1 and iRhom2/RHBDF2. Zn(2+) serves as cofactor. In terms of processing, the precursor is cleaved by a furin endopeptidase. Post-translationally, phosphorylated.

Its subcellular location is the membrane. It carries out the reaction Narrow endopeptidase specificity. Cleaves Pro-Leu-Ala-Gln-Ala-|-Val-Arg-Ser-Ser-Ser in the membrane-bound, 26-kDa form of tumor necrosis factor alpha (TNFalpha). Similarly cleaves other membrane-anchored, cell-surface proteins to 'shed' the extracellular domains.. Functionally, transmembrane metalloprotease which mediates the ectodomain shedding of a myriad of transmembrane proteins including adhesion proteins, growth factor precursors and cytokines important for inflammation and immunity. Cleaves the membrane-bound precursor of TNF-alpha to its mature soluble form. Responsible for the proteolytical release of soluble JAM3 from endothelial cells surface. Responsible for the proteolytic release of several other cell-surface proteins, including p75 TNF-receptor, interleukin 1 receptor type II, p55 TNF-receptor, transforming growth factor-alpha, L-selectin, growth hormone receptor, MUC1 and the amyloid precursor protein. Acts as an activator of Notch pathway by mediating cleavage of Notch, generating the membrane-associated intermediate fragment called Notch extracellular truncation (NEXT). Plays a role in the proteolytic processing of ACE2. Plays a role in hemostasis through shedding of GP1BA, the platelet glycoprotein Ib alpha chain. Mediates the proteolytic cleavage of LAG3, leading to release the secreted form of LAG3. Mediates the proteolytic cleavage of IL6R, leading to the release of secreted form of IL6R. Mediates the proteolytic cleavage and shedding of FCGR3A upon NK cell stimulation, a mechanism that allows for increased NK cell motility and detachment from opsonized target cells. Cleaves TREM2, resulting in shedding of the TREM2 ectodomain. (Microbial infection) Acts as a receptor for classical swine fever virus. In Sus scrofa (Pig), this protein is Disintegrin and metalloproteinase domain-containing protein 17 (ADAM17).